A 300-amino-acid chain; its full sequence is Probable acetyltransferase Rv3034c (300 aa).

Positions 1 to 25 are cleaved as a signal peptide; it reads MNVLSLGSSSGVVWGRVPITAPAGA.

Belongs to the transferase hexapeptide repeat family.

Functionally, may be involved in the biosynthesis of 6-O-methylglucosyl-containing lipopolysaccharides (MGLP). Its function is as follows. Regulates host peroxisome homeostasis in response to intracellular redox levels to favor mycobacterial infection in macrophage. Induces the expression of host peroxisome biogenesis and proliferation factors as well as peroxisome associated enzymes. Inhibits the induction of host pexophagy mechanism by down-regulating the expression of pexophagy associated proteins and adapter molecules in infected macrophages. However, during increased oxidative stress conditions, it induces degradation of dysfunctional and damaged peroxisomes. Regulation of peroxisome biogenesis and degradation is dependent upon host p-mTORC1 mediated signaling pathway. This Mycobacterium tuberculosis (strain ATCC 25618 / H37Rv) protein is Probable acetyltransferase Rv3034c.